The primary structure comprises 442 residues: SPRY domain-containing protein 3 (442 aa).

Residues 17–204 enclose the B30.2/SPRY domain; the sequence is DLNLHYRFLN…VRLHLNAELG (188 aa). Residues 371-394 are disordered; sequence EGEEEEEEEEEEEDGEEIEPEHEG. The segment covering 372–390 has biased composition (acidic residues); the sequence is GEEEEEEEEEEEDGEEIEP.

In Homo sapiens (Human), this protein is SPRY domain-containing protein 3 (SPRYD3).